We begin with the raw amino-acid sequence, 156 residues long: Regulatory protein RecX (156 aa).

It belongs to the RecX family.

It localises to the cytoplasm. Functionally, modulates RecA activity. The chain is Regulatory protein RecX from Pseudomonas putida (strain ATCC 700007 / DSM 6899 / JCM 31910 / BCRC 17059 / LMG 24140 / F1).